The following is a 298-amino-acid chain: GPN-loop GTPase QQT1 (298 aa).

12 to 17 (GSGKTT) lines the GTP pocket. Residues 69–71 (GPN) carry the Gly-Pro-Asn (GPN)-loop; involved in dimer interface motif. Residue 173-176 (SKID) coordinates GTP.

This sequence belongs to the GPN-loop GTPase family. Heterodimer with QQT2. In terms of tissue distribution, expressed in vascular tissues, root tips, apical and root meristematic regions, and floral primordia.

Its subcellular location is the cytoplasm. It localises to the nucleus. The protein resides in the cytoskeleton. It is found in the spindle. The protein localises to the phragmoplast. Functionally, small GTPase that is essential for the correct formation of the tangential divisions in early embryos. Associates with microtubule during mitosis and may function in the positioning of the division plane. May participate in the patterning of the early embryo at the octant-dermatogen transition. Is crucial for normal development of the plant. This chain is GPN-loop GTPase QQT1, found in Arabidopsis thaliana (Mouse-ear cress).